A 731-amino-acid chain; its full sequence is Vezatin (731 aa).

The next 2 membrane-spanning stretches (helical) occupy residues 91–111 (LATP…LLVM) and 114–134 (TWWI…YLVI). Residues 382 to 414 (VRSLQLHLKALLNEVIILEDELEKLVCTKETQE) are a coiled coil. Disordered stretches follow at residues 570–671 (PVDP…DSLQ) and 710–731 (QTFG…IEEK). Polar residues predominate over residues 577-586 (ISNSEPSMNS). Positions 590 to 601 (KVSKNDTEEESS) are enriched in basic and acidic residues. Over residues 658-671 (GLTTAPPTPRDSLQ) the composition is skewed to polar residues. Acidic residues predominate over residues 712-721 (FGDEEEEQII). Residues 722–731 (EENKNKIEEK) show a composition bias toward basic and acidic residues.

It belongs to the vezatin family. In terms of assembly, interacts with USH2A (via the cytoplasmic region); the interaction associates VEZT with the USH2 complex at the stereocilia base. Interacts with myosin MYO7A and the cadherin-catenins complex.

Its subcellular location is the cell membrane. It is found in the cell projection. It localises to the stereocilium membrane. The protein localises to the cell junction. The protein resides in the adherens junction. Its subcellular location is the nucleus. It is found in the cytoplasmic vesicle. It localises to the secretory vesicle. The protein localises to the acrosome. Its function is as follows. Plays a pivotal role in the establishment of adherens junctions and their maintenance in adult life. Required for morphogenesis of the preimplantation embryo, and for the implantation process. The chain is Vezatin (VEZT) from Pongo abelii (Sumatran orangutan).